Consider the following 92-residue polypeptide: Small ribosomal subunit protein bS20 (92 aa).

The span at 1–21 (MPLHKSAEKRLRQAARRNERN) shows a compositional bias: basic and acidic residues. Disordered stretches follow at residues 1-26 (MPLHKSAEKRLRQAARRNERNRARKK) and 73-92 (ASRKKAQLTKALNNYTPTAS). Positions 82-92 (KALNNYTPTAS) are enriched in polar residues.

The protein belongs to the bacterial ribosomal protein bS20 family.

Functionally, binds directly to 16S ribosomal RNA. This Chlorobaculum tepidum (strain ATCC 49652 / DSM 12025 / NBRC 103806 / TLS) (Chlorobium tepidum) protein is Small ribosomal subunit protein bS20.